The sequence spans 455 residues: Ammonium transporter Rh type B (455 aa).

Over 1-13 (MAWSPRHSAGRRL) the chain is Cytoplasmic. The helical transmembrane segment at 14–34 (QLPLLCLLLQGATAILFAVFV) threads the bilayer. Over 35 to 61 (RYNRETDAALWHWGNHSNADNEFYFRY) the chain is Extracellular. Asn49 is a glycosylation site (N-linked (GlcNAc...) asparagine). The helical transmembrane segment at 62-82 (PSFQDVHAMIFVGFGFLMVFL) threads the bilayer. The Cytoplasmic segment spans residues 83-86 (QRYG). The helical transmembrane segment at 87–107 (FGSVGFTFLLAAFALQWSTLI) threads the bilayer. The Extracellular segment spans residues 108-124 (QGFFHSFRGGYILVGME). Residues 125–145 (SMINADFCAGAVLISFGAVLG) traverse the membrane as a helical segment. At 146-151 (KTGPVQ) the chain is on the cytoplasmic side. A helical membrane pass occupies residues 152–172 (LLLMALLEVVLFGLNEFVLLS). Residues 173-179 (LLEVKDA) are Extracellular-facing. The helical transmembrane segment at 180–200 (GGSMTIHTFGAYFGLILSRVL) threads the bilayer. At 201-219 (YRPQLEKSKHRQGSVYHSD) the chain is on the cytoplasmic side. A helical membrane pass occupies residues 220-240 (LFAMIGTIFLWIFWPSFNSAP). Over 241-253 (TALGDGQHRTALN) the chain is Extracellular. A helical membrane pass occupies residues 254–274 (TYYSLTASTLSTFALSALVGG). Topologically, residues 275 to 277 (DGR) are cytoplasmic. A helical membrane pass occupies residues 278–298 (LDMVHVQNAALAGGVVVGTSA). Glu299 is a topological domain (extracellular). A helical transmembrane segment spans residues 300–320 (MMLTPFGALAAGFLAGAISTL). The Cytoplasmic portion of the chain corresponds to 321–343 (GYKFVTPILESKLKVQDTCGVHN). The helical transmembrane segment at 344-364 (LHGMPGVLGALLGGLVAGLAT) threads the bilayer. At 365 to 393 (REAYGDGLESVFPLIAEGQRSATSQAMHQ) the chain is on the extracellular side. The helical transmembrane segment at 394–414 (LFGLFVTLTFASVGGGLGGLL) threads the bilayer. Residues 415 to 455 (LRLPILDSPPDSQCYEDQIYWEVPGEHEHLAQGSEETETQA) are Cytoplasmic-facing. The interval 416–424 (RLPILDSPP) is interaction with ANK3. Residues 429–432 (YEDQ) carry the Basolateral sorting signal motif.

Belongs to the ammonium transporter (TC 2.A.49) family. Rh subfamily. Interacts (via C-terminus) with ANK2 and ANK3; required for targeting to the basolateral membrane. In terms of processing, N-glycosylated.

The protein resides in the cell membrane. Its subcellular location is the basolateral cell membrane. It catalyses the reaction NH4(+)(in) = NH4(+)(out). It carries out the reaction methylamine(out) = methylamine(in). The enzyme catalyses CO2(out) = CO2(in). In terms of biological role, ammonium transporter involved in the maintenance of acid-base homeostasis. Transports ammonium and its related derivative methylammonium across the basolateral plasma membrane of epithelial cells likely contributing to renal transepithelial ammonia transport and ammonia metabolism. May transport either NH4(+) or NH3 ammonia species predominantly mediating an electrogenic NH4(+) transport. May act as a CO2 channel providing for renal acid secretion. The polypeptide is Ammonium transporter Rh type B (RHBG) (Bos taurus (Bovine)).